Reading from the N-terminus, the 432-residue chain is DEAD-box ATP-dependent RNA helicase 56 (432 aa).

A coiled-coil region spans residues 1 to 28 (MAEAEVKDNEVYEEDLVDYEEEVENGTD). The Q motif signature appears at 51–79 (SGFRDFLLKPELLRAIQDCGFEHPSEVQH). Residues 82-255 (IPQAILGMDV…KKFMQDPMEI (174 aa)) form the Helicase ATP-binding domain. 95 to 102 (AKSGMGKT) provides a ligand contact to ATP. Positions 202 to 205 (DECD) match the DEAD box motif. One can recognise a Helicase C-terminal domain in the interval 283-428 (KLNDLLDALD…ELPEQIDTST (146 aa)).

This sequence belongs to the DEAD box helicase family. DECD subfamily. As to quaternary structure, homodimer and heterodimer with AIP2. Interacts with API5.

Its subcellular location is the nucleus. It catalyses the reaction ATP + H2O = ADP + phosphate + H(+). Its function is as follows. ATP-binding RNA helicase involved in pre-mRNA splicing. Required for the export of mRNA out of the nucleus. Required for tapetal programmed cell death (PCD) and degeneration during anther development. Forms dimer with AIP2 and binds the promoter region of the cysteine protease CP1. Can complement the yeast RNA helicase SUB2. Plants silencing AIP1 and AIP2 are male sterile. The chain is DEAD-box ATP-dependent RNA helicase 56 from Oryza sativa subsp. japonica (Rice).